A 686-amino-acid polypeptide reads, in one-letter code: Glycine--tRNA ligase beta subunit (686 aa).

This sequence belongs to the class-II aminoacyl-tRNA synthetase family. As to quaternary structure, tetramer of two alpha and two beta subunits.

The protein localises to the cytoplasm. The enzyme catalyses tRNA(Gly) + glycine + ATP = glycyl-tRNA(Gly) + AMP + diphosphate. The sequence is that of Glycine--tRNA ligase beta subunit from Geobacter metallireducens (strain ATCC 53774 / DSM 7210 / GS-15).